A 107-amino-acid polypeptide reads, in one-letter code: Small ribosomal subunit protein uS17 (107 aa).

The protein belongs to the universal ribosomal protein uS17 family. In terms of assembly, part of the 30S ribosomal subunit.

Functionally, one of the primary rRNA binding proteins, it binds specifically to the 5'-end of 16S ribosomal RNA. The protein is Small ribosomal subunit protein uS17 of Nitrosopumilus maritimus (strain SCM1).